A 93-amino-acid chain; its full sequence is Small ribosomal subunit protein uS19m (93 aa).

The protein belongs to the universal ribosomal protein uS19 family. As to quaternary structure, component of the mitochondrial small ribosomal subunit (mt-SSU). Mature yeast 74S mitochondrial ribosomes consist of a small (37S) and a large (54S) subunit. The 37S small subunit contains a 15S ribosomal RNA (15S mt-rRNA) and at least 32 different proteins. The 54S large subunit contains a 21S rRNA (21S mt-rRNA) and at least 45 different proteins.

The protein resides in the mitochondrion. In terms of biological role, component of the mitochondrial ribosome (mitoribosome), a dedicated translation machinery responsible for the synthesis of mitochondrial genome-encoded proteins, including at least some of the essential transmembrane subunits of the mitochondrial respiratory chain. The mitoribosomes are attached to the mitochondrial inner membrane and translation products are cotranslationally integrated into the membrane. In Schizosaccharomyces pombe (strain 972 / ATCC 24843) (Fission yeast), this protein is Small ribosomal subunit protein uS19m (rsm19).